A 369-amino-acid polypeptide reads, in one-letter code: tRNA 2-selenouridine synthase (369 aa).

The region spanning 12–136 is the Rhodanese domain; the sequence is FLDDIPLMDV…LRNFLFETTR (125 aa). Residue C95 is the S-selanylcysteine intermediate of the active site.

The protein belongs to the SelU family. As to quaternary structure, monomer.

It carries out the reaction 5-methylaminomethyl-2-thiouridine(34) in tRNA + selenophosphate + (2E)-geranyl diphosphate + H2O + H(+) = 5-methylaminomethyl-2-selenouridine(34) in tRNA + (2E)-thiogeraniol + phosphate + diphosphate. The enzyme catalyses 5-methylaminomethyl-2-thiouridine(34) in tRNA + (2E)-geranyl diphosphate = 5-methylaminomethyl-S-(2E)-geranyl-thiouridine(34) in tRNA + diphosphate. The catalysed reaction is 5-methylaminomethyl-S-(2E)-geranyl-thiouridine(34) in tRNA + selenophosphate + H(+) = 5-methylaminomethyl-2-(Se-phospho)selenouridine(34) in tRNA + (2E)-thiogeraniol. It catalyses the reaction 5-methylaminomethyl-2-(Se-phospho)selenouridine(34) in tRNA + H2O = 5-methylaminomethyl-2-selenouridine(34) in tRNA + phosphate. In terms of biological role, involved in the post-transcriptional modification of the uridine at the wobble position (U34) of tRNA(Lys), tRNA(Glu) and tRNA(Gln). Catalyzes the conversion of 2-thiouridine (S2U-RNA) to 2-selenouridine (Se2U-RNA). Acts in a two-step process involving geranylation of 2-thiouridine (S2U) to S-geranyl-2-thiouridine (geS2U) and subsequent selenation of the latter derivative to 2-selenouridine (Se2U) in the tRNA chain. The sequence is that of tRNA 2-selenouridine synthase from Pseudomonas aeruginosa (strain LESB58).